The primary structure comprises 136 residues: uncharacterized protein (136 aa).

The first 35 residues, 1-35, serve as a signal peptide directing secretion; that stretch reads MTHRAVPCQPRAFSKIKVLVISFLFLMVAFLPFSS.

This is an uncharacterized protein from Saccharomyces cerevisiae (strain ATCC 204508 / S288c) (Baker's yeast).